We begin with the raw amino-acid sequence, 273 residues long: Dermonecrotic toxin LapSicTox-alphaIB1bi (273 aa).

H5 is a catalytic residue. Positions 25 and 27 each coordinate Mg(2+). H41 acts as the Nucleophile in catalysis. 2 disulfides stabilise this stretch: C45-C51 and C47-C190. D85 serves as a coordination point for Mg(2+). N-linked (GlcNAc...) asparagine glycans are attached at residues N189 and N250.

It belongs to the arthropod phospholipase D family. Class II subfamily. It depends on Mg(2+) as a cofactor. Expressed by the venom gland.

The protein resides in the secreted. The enzyme catalyses an N-(acyl)-sphingosylphosphocholine = an N-(acyl)-sphingosyl-1,3-cyclic phosphate + choline. It catalyses the reaction an N-(acyl)-sphingosylphosphoethanolamine = an N-(acyl)-sphingosyl-1,3-cyclic phosphate + ethanolamine. The catalysed reaction is a 1-acyl-sn-glycero-3-phosphocholine = a 1-acyl-sn-glycero-2,3-cyclic phosphate + choline. It carries out the reaction a 1-acyl-sn-glycero-3-phosphoethanolamine = a 1-acyl-sn-glycero-2,3-cyclic phosphate + ethanolamine. Dermonecrotic toxins cleave the phosphodiester linkage between the phosphate and headgroup of certain phospholipids (sphingolipid and lysolipid substrates), forming an alcohol (often choline) and a cyclic phosphate. This toxin acts on sphingomyelin (SM). It may also act on ceramide phosphoethanolamine (CPE), lysophosphatidylcholine (LPC) and lysophosphatidylethanolamine (LPE), but not on lysophosphatidylserine (LPS), and lysophosphatidylglycerol (LPG). It acts by transphosphatidylation, releasing exclusively cyclic phosphate products as second products. Induces dermonecrosis, hemolysis, increased vascular permeability, edema, inflammatory response, and platelet aggregation. The polypeptide is Dermonecrotic toxin LapSicTox-alphaIB1bi (Loxosceles apachea (Apache recluse spider)).